Consider the following 413-residue polypeptide: MKYEKLLPRFLEYVKVNTRSDENSTTTPSTQALVEFAHKMGEDMKALGLKDVHYLESNGYVIGTIPANTDKKVRKIGLLAHLDTADFNAEGVNPQILENYDGESVIQLGDTEFTLDPKDFPNLKNYKGQTLVHTDGTTLLGSDDKSGVAEIMTLADYLLNINPDFEHGEIRVGFGPDEEIGVGADKFDVADFDVDFAYTVDGGPLGELQYETFSAAGAVIEFQGKNVHPGTAKNMMVNALQLAIDYHNALPEFDRPEKTEGREGFFHLLKLDGTPEEARAQYIIRDHEEGKFNERKALMQEIADKMNAELGQNRVKPLIKDQYYNMAQIIEKDMSIIDIAKKAMENLDIAPIIEPIRGGTDGSKISFMGLPTPNLFAGGENMHGRFEFVSVQTMEKAVDTLLEIIRLNNEVAK.

A Zn(2+)-binding site is contributed by histidine 81. The active site involves aspartate 83. Position 143 (aspartate 143) interacts with Zn(2+). The active-site Proton acceptor is glutamate 178. Residues glutamate 179, aspartate 201, and histidine 383 each coordinate Zn(2+).

The protein belongs to the peptidase M20B family. Homodimer. The cofactor is Zn(2+).

Its subcellular location is the cytoplasm. The enzyme catalyses Release of the N-terminal residue from a tripeptide.. With respect to regulation, inhibited by EDTA, by the reducing agents dithiothreitol and 13-mercaptoethanol, and by the divalent cation Cu(2+). Functionally, cleaves the N-terminal amino acid of tripeptides. Has a broad specificity for tripeptides with no clear preference for a particular tripeptide. Tripeptides with proline in the second position are an exception and are not hydrolyzed. Does not hydrolyze dipeptides, tetrapeptides, or oligopeptides. This is Peptidase T (pepT) from Lactococcus lactis subsp. cremoris (Streptococcus cremoris).